A 917-amino-acid polypeptide reads, in one-letter code: MLX-interacting protein (917 aa).

The segment at Met-1–Arg-72 is disordered. Ala-2 carries the N-acetylalanine modification. 3 positions are modified to phosphoserine: Ser-9, Ser-33, and Ser-39. Residues Pro-27–Glu-37 show a composition bias toward acidic residues. Residues Ala-47–Ala-57 show a composition bias toward low complexity. Positions Arg-73–Asp-327 are required for cytoplasmic localization. The transactivation domain stretch occupies residues Asn-322 to Pro-445. 2 disordered regions span residues Leu-347 to Thr-402 and Ser-632 to Lys-711. Over residues Leu-378–Ala-388 the composition is skewed to polar residues. Low complexity predominate over residues Ser-632 to Ser-643. The residue at position 667 (Ser-667) is a Phosphoserine. Positions Val-670–Ala-685 are enriched in polar residues. The span at Ser-686–Ser-704 shows a compositional bias: low complexity. The 51-residue stretch at Lys-717–Leu-767 folds into the bHLH domain. The tract at residues Leu-767–Leu-788 is leucine-zipper. The mediates heterotypic interactions between MLXIP and MLX and is required for cytoplasmic localization stretch occupies residues Trp-830–Val-879. The segment at Ser-897–Ser-917 is disordered.

In terms of assembly, efficient DNA binding requires dimerization with another bHLH protein. Binds DNA as a homodimer or a heterodimer with MLX/TCFL4.

The protein resides in the cytoplasm. Its subcellular location is the nucleus. It localises to the mitochondrion outer membrane. Binds DNA as a heterodimer with MLX/TCFL4 and activates transcription. Binds to the canonical E box sequence 5'-CACGTG-3'. Plays a role in transcriptional activation of glycolytic target genes. Involved in glucose-responsive gene regulation. Regulates transcription in response to changes in cellular carbohydrate abundance such as occurs during fasting to feeding metabolic transition. Refeeding stimulates MLXIPL/ChREBP transcription factor, leading to increased BCKDK to PPM1K expression ratio, phosphorylation and activation of ACLY that ultimately results in the generation of malonyl-CoA and oxaloacetate immediate substrates of de novo lipogenesis and gluconeogenesis, respectively. The protein is MLX-interacting protein of Mus musculus (Mouse).